A 507-amino-acid chain; its full sequence is Glycerol kinase (507 aa).

ADP is bound at residue T12. ATP is bound by residues T12, T13, and S14. Sn-glycerol 3-phosphate is bound at residue T12. Residue R16 participates in ADP binding. Positions 82, 83, 134, and 250 each coordinate sn-glycerol 3-phosphate. Residues R82, E83, Y134, D250, and Q251 each coordinate glycerol. The ADP site is built by T272 and G316. Positions 272, 316, 320, and 417 each coordinate ATP. The ADP site is built by G417 and N421.

Belongs to the FGGY kinase family.

It catalyses the reaction glycerol + ATP = sn-glycerol 3-phosphate + ADP + H(+). Its pathway is polyol metabolism; glycerol degradation via glycerol kinase pathway; sn-glycerol 3-phosphate from glycerol: step 1/1. With respect to regulation, inhibited by fructose 1,6-bisphosphate (FBP). Functionally, key enzyme in the regulation of glycerol uptake and metabolism. Catalyzes the phosphorylation of glycerol to yield sn-glycerol 3-phosphate. This is Glycerol kinase from Beijerinckia indica subsp. indica (strain ATCC 9039 / DSM 1715 / NCIMB 8712).